Consider the following 399-residue polypeptide: Acetate kinase (399 aa).

Position 7 (Asn7) interacts with Mg(2+). Lys14 contributes to the ATP binding site. Arg91 lines the substrate pocket. Catalysis depends on Asp148, which acts as the Proton donor/acceptor. ATP is bound by residues 208-212, 283-285, and 331-335; these read HLGNG, DFR, and GLGEN. Glu384 provides a ligand contact to Mg(2+).

The protein belongs to the acetokinase family. In terms of assembly, homodimer. Mg(2+) serves as cofactor. The cofactor is Mn(2+).

It localises to the cytoplasm. It catalyses the reaction acetate + ATP = acetyl phosphate + ADP. Its pathway is metabolic intermediate biosynthesis; acetyl-CoA biosynthesis; acetyl-CoA from acetate: step 1/2. Catalyzes the formation of acetyl phosphate from acetate and ATP. Can also catalyze the reverse reaction. The chain is Acetate kinase from Desulfitobacterium hafniense (strain DSM 10664 / DCB-2).